The primary structure comprises 276 residues: Glyoxal reductase (276 aa).

Y54 functions as the Proton donor in the catalytic mechanism. A substrate-binding site is contributed by H112. 190–242 (SPLMQGQLLDNEVLTQIAEKHNKSVAQVILRWDLQHGVVTIPKSIKEHRIIEN) provides a ligand contact to NADP(+).

This sequence belongs to the aldo/keto reductase family.

It carries out the reaction (S)-lactaldehyde + NADP(+) = methylglyoxal + NADPH + H(+). Functionally, reduces glyoxal and methylglyoxal (2-oxopropanal). Is not involved in the vitamin B6 biosynthesis. The polypeptide is Glyoxal reductase (yvgN) (Bacillus subtilis (strain 168)).